A 343-amino-acid polypeptide reads, in one-letter code: Glucokinase (343 aa).

21 to 26 serves as a coordination point for ATP; the sequence is ADVGGT.

Belongs to the bacterial glucokinase family.

It localises to the cytoplasm. It carries out the reaction D-glucose + ATP = D-glucose 6-phosphate + ADP + H(+). The protein is Glucokinase of Cupriavidus pinatubonensis (strain JMP 134 / LMG 1197) (Cupriavidus necator (strain JMP 134)).